The sequence spans 235 residues: Large ribosomal subunit protein uL1 (235 aa).

This sequence belongs to the universal ribosomal protein uL1 family. In terms of assembly, part of the 50S ribosomal subunit.

In terms of biological role, binds directly to 23S rRNA. The L1 stalk is quite mobile in the ribosome, and is involved in E site tRNA release. Functionally, protein L1 is also a translational repressor protein, it controls the translation of the L11 operon by binding to its mRNA. The polypeptide is Large ribosomal subunit protein uL1 (Mycolicibacterium smegmatis (strain ATCC 700084 / mc(2)155) (Mycobacterium smegmatis)).